A 188-amino-acid polypeptide reads, in one-letter code: Transmembrane protein 160 (188 aa).

The N-terminal 96 residues, Met1–Arg96, are a transit peptide targeting the mitochondrion. Residues Ser21–Ser53 are disordered. Position 48 is a phosphoserine (Ser48). Helical transmembrane passes span Phe102–Ala122 and Ala135–Leu155. Positions Pro168 to Glu188 are disordered.

It belongs to the TMEM160 family. In terms of tissue distribution, expressed in peripheral sensory neurons of dorsal root ganglia (DRG).

It localises to the mitochondrion inner membrane. This Mus musculus (Mouse) protein is Transmembrane protein 160.